We begin with the raw amino-acid sequence, 257 residues long: Enterotoxin type A (257 aa).

Positions 1–27 are cleaved as a signal peptide; it reads MKKTAFILLLFIALTWTTSPLVNGSEK. Residues cysteine 120 and cysteine 130 are joined by a disulfide bond. 3 residues coordinate Zn(2+): histidine 211, histidine 249, and aspartate 251.

Belongs to the staphylococcal/streptococcal toxin family. As to quaternary structure, monomer. Interacts with MHC class II molecules alpha/HLA-DRB1 and beta/HLA-DRA chains. The interaction with MHC-II molecules occurs at both zinc-dependent and zinc-independent sites. Interacts with T-cell receptor beta variable 7-9/TRBV7-9. Requires Zn(2+) as cofactor.

The protein localises to the secreted. Functionally, staphylococcal enterotoxin that activates the host immune system by binding as unprocessed molecules to major histocompatibility (MHC) complex class II and T-cell receptor (TCR) molecules. In turn, waves of cellular activation, cytokine production, and migration into the lung tissue and airways occur via alphabeta T-cells. Also causes the intoxication staphylococcal food poisoning syndrome. The illness is characterized by high fever, hypotension, diarrhea, shock, and in some cases death. This chain is Enterotoxin type A (sea), found in Staphylococcus aureus (strain Newman).